Consider the following 553-residue polypeptide: MAAVSLRLGDLVWGKLGRYPPWPGKIVNPPKDLKKPRGKKCFFVKFFGTEDHAWIKVEQLKPYHLHKEEMIKINKGKRFQQAVDAVEEFLRKTKGKDQASSHNSSEEKNRRNSSEERGKQSAREEKRKASLSEGKLKKGTGEGKKRVSSVSSERGSKSPLKRAQDQSPRKRGRPPKDEKDLTIPESSTVKRVMTGTVAGFKWPPSVSEPVKDSDPHFHHFLLSQTEKPAVCYQAITKKLKVCEEETGSTSIQAADSTAVNGSITPTDKKIGFLGLGLMGSGIVSNLLKMGHTVTVWNRTAEKCDLFIQEGARLGRTPAEVVSTCDITFACVSDPKAAKDLVLGPSGVLQGIRPGKCYVDMSTVDADTVTELAQVIVSRGGRFLEAPVSGNQQLSNDGMLVILAAGDRGLYEDCSSCFQAMGKTSFFLGEVGNAAKMMLIVNMVQGSFMATIAEGLTLAQVTGQSQQTLLDILNQGQLASIFLDQKCQNILQGNFKPDFYLKYIQKDLRLAIALGDSVNHPTPMAAAANEVYKRAKALDQSDNDMSAVYRAYIH.

A PWWP domain is found at 8 to 66 (LGDLVWGKLGRYPPWPGKIVNPPKDLKKPRGKKCFFVKFFGTEDHAWIKVEQLKPYHLH). 2 stretches are compositionally biased toward basic and acidic residues: residues 92–145 (KTKG…EGKK) and 162–182 (RAQDQSPRKRGRPPKDEKDLT). Positions 92–188 (KTKGKDQASS…KDLTIPESST (97 aa)) are disordered. Positions 168 to 180 (PRKRGRPPKDEKD) form a DNA-binding region, a.T hook. The segment at 214-217 (DPHF) is interaction with histone H3. The segment at 261 to 553 (GSITPTDKKI…MSAVYRAYIH (293 aa)) is dehydrogenase domain. NAD(+)-binding positions include 271-285 (GFLGLGLMGSGIVSN), Thr-362, and Lys-505.

The protein belongs to the HIBADH-related family. NP60 subfamily. Homotetramere. Binds to mononucleosomes.

Its subcellular location is the nucleus. The protein resides in the chromosome. Cytokine-like nuclear factor with chromatin gene reader activity involved in chromatin modification and regulation of gene expression. Acts as a nucleosome-destabilizing factor that is recruited to genes during transcriptional activation. Recognizes and binds histone H3 without a preference for specific epigenetic markers and also binds DNA. Interacts with KDM1B and promotes its histone demethylase activity by facilitating the capture of H3 tails, they form a multifunctional enzyme complex that modifies transcribed chromatin and facilitates Pol II transcription through nucleosomes. The protein is Cytokine-like nuclear factor N-PAC (GLYR1) of Gallus gallus (Chicken).